We begin with the raw amino-acid sequence, 598 residues long: NADH-quinone oxidoreductase subunit C/D (598 aa).

An NADH dehydrogenase I subunit C region spans residues 1-189; that stretch reads MTDSTTHDRE…DPFELTRQKQ (189 aa). The interval 213–598 is NADH dehydrogenase I subunit D; sequence DFMFLNLGPN…IDFVMSDVDR (386 aa).

The protein in the N-terminal section; belongs to the complex I 30 kDa subunit family. This sequence in the C-terminal section; belongs to the complex I 49 kDa subunit family. NDH-1 is composed of 13 different subunits. Subunits NuoB, CD, E, F, and G constitute the peripheral sector of the complex.

It is found in the cell inner membrane. It carries out the reaction a quinone + NADH + 5 H(+)(in) = a quinol + NAD(+) + 4 H(+)(out). Its function is as follows. NDH-1 shuttles electrons from NADH, via FMN and iron-sulfur (Fe-S) centers, to quinones in the respiratory chain. The immediate electron acceptor for the enzyme in this species is believed to be ubiquinone. Couples the redox reaction to proton translocation (for every two electrons transferred, four hydrogen ions are translocated across the cytoplasmic membrane), and thus conserves the redox energy in a proton gradient. This is NADH-quinone oxidoreductase subunit C/D from Edwardsiella ictaluri (strain 93-146).